A 308-amino-acid chain; its full sequence is GTPase Era (308 aa).

Residues arginine 14–proline 181 form the Era-type G domain. The segment at glycine 22 to serine 29 is G1. A GTP-binding site is contributed by glycine 22–serine 29. Positions glutamine 48 to alanine 52 are G2. Residues aspartate 69 to glycine 72 form a G3 region. GTP is bound by residues aspartate 69–isoleucine 73 and asparagine 131–aspartate 134. A G4 region spans residues asparagine 131–aspartate 134. The tract at residues isoleucine 160–alanine 162 is G5. Residues leucine 212–glutamate 289 form the KH type-2 domain.

This sequence belongs to the TRAFAC class TrmE-Era-EngA-EngB-Septin-like GTPase superfamily. Era GTPase family. Monomer.

Its subcellular location is the cytoplasm. It is found in the cell inner membrane. Functionally, an essential GTPase that binds both GDP and GTP, with rapid nucleotide exchange. Plays a role in 16S rRNA processing and 30S ribosomal subunit biogenesis and possibly also in cell cycle regulation and energy metabolism. This Bradyrhizobium diazoefficiens (strain JCM 10833 / BCRC 13528 / IAM 13628 / NBRC 14792 / USDA 110) protein is GTPase Era.